Here is a 303-residue protein sequence, read N- to C-terminus: Methionyl-tRNA formyltransferase (303 aa).

Position 108–111 (108–111 (SDLP)) interacts with (6S)-5,6,7,8-tetrahydrofolate.

It belongs to the Fmt family.

The catalysed reaction is L-methionyl-tRNA(fMet) + (6R)-10-formyltetrahydrofolate = N-formyl-L-methionyl-tRNA(fMet) + (6S)-5,6,7,8-tetrahydrofolate + H(+). In terms of biological role, attaches a formyl group to the free amino group of methionyl-tRNA(fMet). The formyl group appears to play a dual role in the initiator identity of N-formylmethionyl-tRNA by promoting its recognition by IF2 and preventing the misappropriation of this tRNA by the elongation apparatus. The sequence is that of Methionyl-tRNA formyltransferase from Rickettsia prowazekii (strain Madrid E).